The sequence spans 247 residues: Protein At-4/1 (247 aa).

2 coiled-coil regions span residues 39 to 126 (VESS…YKIR) and 182 to 247 (LLME…LSSS).

As to quaternary structure, interacts with viral tomato spotted wilt virus (TSWV) movement protein NSM, which is involved in cell-to cell spread of viral genome and enlargement of the host plasmodesmata size exclusion limit (SEL). Expressed in leaves (at protein level).

It is found in the endoplasmic reticulum. It localises to the cell junction. The protein localises to the plasmodesma. Functionally, involved in intra- and inter-cellular trafficking through plasmodesmata (PD). This is Protein At-4/1 from Arabidopsis thaliana (Mouse-ear cress).